We begin with the raw amino-acid sequence, 1204 residues long: DNA-directed RNA polymerase subunit beta' (1204 aa).

4 residues coordinate Zn(2+): cysteine 60, cysteine 62, cysteine 75, and cysteine 78. Aspartate 449, aspartate 451, and aspartate 453 together coordinate Mg(2+). Zn(2+) is bound by residues cysteine 819, cysteine 893, cysteine 900, and cysteine 903.

The protein belongs to the RNA polymerase beta' chain family. As to quaternary structure, the RNAP catalytic core consists of 2 alpha, 1 beta, 1 beta' and 1 omega subunit. When a sigma factor is associated with the core the holoenzyme is formed, which can initiate transcription. Mg(2+) is required as a cofactor. The cofactor is Zn(2+).

It carries out the reaction RNA(n) + a ribonucleoside 5'-triphosphate = RNA(n+1) + diphosphate. DNA-dependent RNA polymerase catalyzes the transcription of DNA into RNA using the four ribonucleoside triphosphates as substrates. This Bacillus cytotoxicus (strain DSM 22905 / CIP 110041 / 391-98 / NVH 391-98) protein is DNA-directed RNA polymerase subunit beta'.